We begin with the raw amino-acid sequence, 258 residues long: Imidazole glycerol phosphate synthase subunit HisF (258 aa).

Active-site residues include aspartate 11 and aspartate 130.

The protein belongs to the HisA/HisF family. As to quaternary structure, heterodimer of HisH and HisF.

It is found in the cytoplasm. The catalysed reaction is 5-[(5-phospho-1-deoxy-D-ribulos-1-ylimino)methylamino]-1-(5-phospho-beta-D-ribosyl)imidazole-4-carboxamide + L-glutamine = D-erythro-1-(imidazol-4-yl)glycerol 3-phosphate + 5-amino-1-(5-phospho-beta-D-ribosyl)imidazole-4-carboxamide + L-glutamate + H(+). It functions in the pathway amino-acid biosynthesis; L-histidine biosynthesis; L-histidine from 5-phospho-alpha-D-ribose 1-diphosphate: step 5/9. Its function is as follows. IGPS catalyzes the conversion of PRFAR and glutamine to IGP, AICAR and glutamate. The HisF subunit catalyzes the cyclization activity that produces IGP and AICAR from PRFAR using the ammonia provided by the HisH subunit. The sequence is that of Imidazole glycerol phosphate synthase subunit HisF from Escherichia coli O1:K1 / APEC.